The following is a 514-amino-acid chain: tRNA-2-methylthio-N(6)-dimethylallyladenosine synthase (514 aa).

Residues 1-21 (MNEEQRKASSVDVLAERDKKA) form a disordered region. Residues 68–186 (RTFLIKTYGC…LPEILEEAYL (119 aa)) enclose the MTTase N-terminal domain. Residues Cys77, Cys113, Cys147, Cys223, Cys227, and Cys230 each coordinate [4Fe-4S] cluster. The Radical SAM core domain maps to 209-440 (REGNIKAWVN…KKVGHYSQIA (232 aa)). In terms of domain architecture, TRAM spans 442-505 (SKYEGQTVTV…QYSLNGSFIK (64 aa)).

The protein belongs to the methylthiotransferase family. MiaB subfamily. In terms of assembly, monomer. [4Fe-4S] cluster is required as a cofactor.

The protein localises to the cytoplasm. It catalyses the reaction N(6)-dimethylallyladenosine(37) in tRNA + (sulfur carrier)-SH + AH2 + 2 S-adenosyl-L-methionine = 2-methylsulfanyl-N(6)-dimethylallyladenosine(37) in tRNA + (sulfur carrier)-H + 5'-deoxyadenosine + L-methionine + A + S-adenosyl-L-homocysteine + 2 H(+). In terms of biological role, catalyzes the methylthiolation of N6-(dimethylallyl)adenosine (i(6)A), leading to the formation of 2-methylthio-N6-(dimethylallyl)adenosine (ms(2)i(6)A) at position 37 in tRNAs that read codons beginning with uridine. In Staphylococcus aureus (strain USA300 / TCH1516), this protein is tRNA-2-methylthio-N(6)-dimethylallyladenosine synthase.